The chain runs to 2266 residues: Little elongation complex subunit 1 (2266 aa).

Residues 23-186 are a coiled coil; sequence CASLQQNLNE…KQKNEKELRH (164 aa). Disordered stretches follow at residues 223 to 259 and 517 to 540; these read GEGSRCVPEKPAKAITSSRVPGEDGTLPPTQGSPLRT and PAQEKEAAPGKSELCSSPLGKRPL. Over residues 250-259 the composition is skewed to polar residues; it reads PPTQGSPLRT. Residues S255, S533, S558, and S589 each carry the phosphoserine modification. The interval 591–623 is disordered; sequence ELEKEKEDTQGFTLGESPESEDDDSGDGMDVAG. Residues 608–617 are compositionally biased toward acidic residues; the sequence is PESEDDDSGD. Position 707 is a phosphoserine (S707). T832 carries the phosphothreonine modification. S925 is subject to Phosphoserine. Residues 925–955 form a disordered region; sequence SPEVSASRRKLDFNSPGGSSPVENSDCSTNS. Over residues 940–955 the composition is skewed to polar residues; that stretch reads PGGSSPVENSDCSTNS. Phosphoserine is present on S958. Disordered regions lie at residues 977–1001 and 1107–1133; these read VQGDGQKQRQPQATDLDSSGTHGSE and TEVESEAFSCSEGSEQQDAPDDSQKNL. Residues 984 to 998 are compositionally biased toward polar residues; it reads QRQPQATDLDSSGTH. An N6-acetyllysine modification is found at K1218. Disordered regions lie at residues 1295 to 1372, 1467 to 1510, and 1543 to 1707; these read TTEN…PSAL, AEKS…KSRL, and NSKL…SASE. Polar residues-rich tracts occupy residues 1306-1319, 1328-1344, 1487-1505, 1565-1588, and 1594-1605; these read RETTGSSSHASEPT, EGSSPISGMPQNENPQS, NNLSCPQEDVSSSGQSTNF, NKPVKTSASSRVETHQSEVAQSFS, and TKTQRSQTQTIL. S1588 carries the phosphoserine modification. 2 stretches are compositionally biased toward low complexity: residues 1609–1620 and 1637–1671; these read DTSTPTDCSPDT and APLIATPPRTSQPLSPLISSSSPSSPASPVGQVSP. S1617 bears the Phosphoserine mark. At T1642 the chain carries Phosphothreonine. Phosphoserine is present on residues S1692, S1697, S1699, S1701, S1712, S1838, and S1854. Residues 1809 to 1902 are disordered; it reads TGSSSGGDCN…AVSAVSQLPL (94 aa). Positions 1825–1843 are enriched in polar residues; the sequence is LGTQQDSSGKRTLSTSTLR. Positions 1889–1901 are enriched in polar residues; it reads CSSPAVSAVSQLP. S1903 is modified (phosphoserine).

The protein belongs to the ICE1 family. Component of the little elongation complex (LEC), at least composed of ELL (ELL, ELL2 or ELL3), ZC3H8, ICE1 and ICE2. Interacts (via N-terminus domain) with ELL. Interacts (via C-terminus domain) with ICE2 and ZC3H8.

The protein resides in the nucleus. It localises to the cajal body. Its function is as follows. Component of the little elongation complex (LEC), a complex required to regulate small nuclear RNA (snRNA) gene transcription by RNA polymerase II and III. Specifically acts as a scaffold protein that promotes the LEC complex formation and recruitment and RNA polymerase II occupancy at snRNA genes in subnuclear bodies. This is Little elongation complex subunit 1 (ICE1) from Homo sapiens (Human).